The chain runs to 410 residues: LL-diaminopimelate aminotransferase (410 aa).

Residues Tyr-15 and Gly-42 each contribute to the substrate site. Pyridoxal 5'-phosphate-binding positions include Tyr-72, 108-109 (SK), Tyr-132, Asn-187, Tyr-218, and 246-248 (SFS). Residues Lys-109, Tyr-132, and Asn-187 each coordinate substrate. Lys-249 is subject to N6-(pyridoxal phosphate)lysine. 2 residues coordinate pyridoxal 5'-phosphate: Arg-257 and Asn-292. The substrate site is built by Asn-292 and Arg-388.

The protein belongs to the class-I pyridoxal-phosphate-dependent aminotransferase family. LL-diaminopimelate aminotransferase subfamily. In terms of assembly, homodimer. The cofactor is pyridoxal 5'-phosphate.

It catalyses the reaction (2S,6S)-2,6-diaminopimelate + 2-oxoglutarate = (S)-2,3,4,5-tetrahydrodipicolinate + L-glutamate + H2O + H(+). It participates in amino-acid biosynthesis; L-lysine biosynthesis via DAP pathway; LL-2,6-diaminopimelate from (S)-tetrahydrodipicolinate (aminotransferase route): step 1/1. Its function is as follows. Involved in the synthesis of meso-diaminopimelate (m-DAP or DL-DAP), required for both lysine and peptidoglycan biosynthesis. Catalyzes the direct conversion of tetrahydrodipicolinate to LL-diaminopimelate. The chain is LL-diaminopimelate aminotransferase from Syntrophotalea carbinolica (strain DSM 2380 / NBRC 103641 / GraBd1) (Pelobacter carbinolicus).